A 301-amino-acid polypeptide reads, in one-letter code: tRNA dimethylallyltransferase (301 aa).

Residue 12 to 19 (GPTAVGKT) participates in ATP binding. Position 14 to 19 (14 to 19 (TAVGKT)) interacts with substrate. The interval 37–40 (DSQQ) is interaction with substrate tRNA.

The protein belongs to the IPP transferase family. Monomer. Mg(2+) is required as a cofactor.

It catalyses the reaction adenosine(37) in tRNA + dimethylallyl diphosphate = N(6)-dimethylallyladenosine(37) in tRNA + diphosphate. Functionally, catalyzes the transfer of a dimethylallyl group onto the adenine at position 37 in tRNAs that read codons beginning with uridine, leading to the formation of N6-(dimethylallyl)adenosine (i(6)A). In Streptococcus uberis (strain ATCC BAA-854 / 0140J), this protein is tRNA dimethylallyltransferase.